Here is a 383-residue protein sequence, read N- to C-terminus: Paralemmin-1 (383 aa).

The residue at position 1 (Met-1) is an N-acetylmethionine. Residues 7-101 (DTVSQQERLQ…EKEIDVLEFG (95 aa)) are a coiled coil. 3 disordered regions span residues 51–164 (RERW…STMM), 242–293 (TLSE…QPGQ), and 333–374 (SVTP…DMKK). Positions 69 to 96 (DMRKQMQEDEQKARSLEESITRLEKEID) are enriched in basic and acidic residues. Ser-116, Ser-122, and Ser-124 each carry phosphoserine. Residues 133 to 143 (ETMVNAQQTPL) are compositionally biased toward polar residues. Phosphothreonine occurs at positions 141, 145, and 153. Residues Ser-157 and Ser-161 each carry the phosphoserine modification. Thr-242 carries the phosphothreonine modification. The residue at position 244 (Ser-244) is a Phosphoserine. The segment covering 257-273 (GLAEDVTRTTPSRREIT) has biased composition (basic and acidic residues). Ser-345 is subject to Phosphoserine. Polar residues predominate over residues 357–367 (QTGPTTTPSDT). Residues Thr-361, Thr-362, and Thr-363 each carry the phosphothreonine modification. Ser-365 carries the phosphoserine modification. Position 367 is a phosphothreonine (Thr-367). 2 S-palmitoyl cysteine lipidation sites follow: Cys-377 and Cys-379. A Cysteine methyl ester modification is found at Cys-380. Cys-380 is lipidated: S-farnesyl cysteine. A propeptide spans 381 to 383 (SVM) (removed in mature form).

Belongs to the paralemmin family. Interacts with dopamine receptor DRD3. Expressed in neurons cells of neuropil-rich areas of the brain, in the Purkinje cells of the cerebellum, in cells of the cerebral cortex, hippocampus, brainstem nuclei and glial processes and sheaths. Expressed in the medulla of the adrenal chromaffin cells and renal duct cells (at protein level).

Its subcellular location is the cell membrane. It is found in the cell projection. The protein localises to the filopodium membrane. The protein resides in the axon. It localises to the dendrite. Its subcellular location is the dendritic spine. It is found in the basolateral cell membrane. The protein localises to the apicolateral cell membrane. In terms of biological role, involved in plasma membrane dynamics and cell process formation. Necessary for axonal and dendritic filopodia induction, for dendritic spine maturation and synapse formation in a palmitoylation-dependent manner. The polypeptide is Paralemmin-1 (Palm) (Rattus norvegicus (Rat)).